A 306-amino-acid chain; its full sequence is 1-aminocyclopropane-1-carboxylate oxidase (306 aa).

The 101-residue stretch at Pro-153 to Pro-253 folds into the Fe2OG dioxygenase domain. 3 residues coordinate Fe cation: His-177, Asp-179, and His-234.

This sequence belongs to the iron/ascorbate-dependent oxidoreductase family. It depends on Fe cation as a cofactor.

It catalyses the reaction 1-aminocyclopropane-1-carboxylate + L-ascorbate + O2 = ethene + L-dehydroascorbate + hydrogen cyanide + CO2 + 2 H2O. It participates in alkene biosynthesis; ethylene biosynthesis via S-adenosyl-L-methionine; ethylene from S-adenosyl-L-methionine: step 2/2. This chain is 1-aminocyclopropane-1-carboxylate oxidase (MAO1B), found in Musa acuminata (Banana).